The following is an 804-amino-acid chain: Protein-lysine N-methyltransferase SMYD4 (804 aa).

112–114 (RSA) provides a ligand contact to S-adenosyl-L-methionine. One can recognise an SET domain in the interval 233–574 (SSIGLCVDPL…KGQEILHCYG (342 aa)). C296, C299, C309, C312, C318, C322, H331, and C335 together coordinate Zn(2+). Residues 296–335 (CHRCLKHTLATVPCDGCSYAKYCSQECLQQAWELYHRTEC) form an MYND-type zinc finger. S-adenosyl-L-methionine contacts are provided by residues N427, 539–540 (NH), Y573, and F595.

Belongs to the class V-like SAM-binding methyltransferase superfamily. Interacts (via MYND-type zinc finger) with HDAC1.

The protein localises to the nucleus. Its subcellular location is the cytoplasm. It carries out the reaction L-lysyl-[protein] + S-adenosyl-L-methionine = N(6)-methyl-L-lysyl-[protein] + S-adenosyl-L-homocysteine + H(+). In terms of biological role, protein-lysine N-methyltransferase. Monomethylates PRMT5, modulating its transcriptional activity. May also act as a histone methyltransferase. Plays a critical role in cardiac development. Acts as a key epigenetic regulator of gene expression during cardiac development via its dual activities as a methyltransferase and negative regulator of HDAC1. This chain is Protein-lysine N-methyltransferase SMYD4, found in Homo sapiens (Human).